The chain runs to 366 residues: Protein lifeguard 1 (366 aa).

The segment at Met-1–Asp-141 is disordered. Pro residues-rich tracts occupy residues Tyr-14 to Pro-44 and Gly-67 to Tyr-109. The next 7 membrane-spanning stretches (helical) occupy residues Val-160–Phe-180, Val-192–Cys-212, Leu-223–Phe-243, Ala-248–Met-268, Val-278–Ile-298, Val-302–Asp-322, and Phe-341–Ile-361.

It belongs to the BI1 family. LFG subfamily.

The protein localises to the membrane. Its function is as follows. Potential apoptotic regulator. The protein is Protein lifeguard 1 (GRINA) of Bos taurus (Bovine).